A 660-amino-acid polypeptide reads, in one-letter code: ATP-dependent zinc metalloprotease FtsH (660 aa).

Residues Met-1–Asp-20 are disordered. Topologically, residues Met-1–Arg-24 are cytoplasmic. Residues Ile-25–His-45 traverse the membrane as a helical segment. The Extracellular portion of the chain corresponds to Ala-46–Pro-118. The chain crosses the membrane as a helical span at residues Gly-119–Val-139. Over Tyr-140–Ser-660 the chain is Cytoplasmic. Gly-213–Thr-220 serves as a coordination point for ATP. Residue His-435 participates in Zn(2+) binding. Residue Glu-436 is part of the active site. 2 residues coordinate Zn(2+): His-439 and Asp-511.

This sequence in the central section; belongs to the AAA ATPase family. In the C-terminal section; belongs to the peptidase M41 family. Homohexamer. Zn(2+) is required as a cofactor.

The protein localises to the cell membrane. Acts as a processive, ATP-dependent zinc metallopeptidase for both cytoplasmic and membrane proteins. Plays a role in the quality control of integral membrane proteins. The polypeptide is ATP-dependent zinc metalloprotease FtsH (Acidimicrobium ferrooxidans (strain DSM 10331 / JCM 15462 / NBRC 103882 / ICP)).